A 713-amino-acid chain; its full sequence is Polyribonucleotide nucleotidyltransferase (713 aa).

Aspartate 488 and aspartate 494 together coordinate Mg(2+). Residues 555–614 (PQMEIIKVPTDKIRDVIGSGGKVIRGIVDETGAKVNIDDDGTVQISAMDRKSIDAAIKMI) form the KH domain. The S1 motif domain occupies 624-692 (GEIYEGKVVS…ERGKVRLSMK (69 aa)).

Belongs to the polyribonucleotide nucleotidyltransferase family. Mg(2+) is required as a cofactor.

It is found in the cytoplasm. It catalyses the reaction RNA(n+1) + phosphate = RNA(n) + a ribonucleoside 5'-diphosphate. Functionally, involved in mRNA degradation. Catalyzes the phosphorolysis of single-stranded polyribonucleotides processively in the 3'- to 5'-direction. This is Polyribonucleotide nucleotidyltransferase from Hyphomonas neptunium (strain ATCC 15444).